A 626-amino-acid chain; its full sequence is Probable potassium transport system protein Kup (626 aa).

12 consecutive transmembrane segments (helical) span residues 13–33, 53–73, 102–122, 138–158, 169–189, 207–227, 248–268, 277–297, 338–358, 367–387, 399–419, and 421–441; these read VALM…SPLY, VLSI…VLLI, FFVV…MITP, HTLD…LFAI, LFGP…GWQV, FVFE…LALT, WFSM…ALLL, PFFL…ATVA, IYLP…VITF, AYGF…FAVL, WMLV…ANIF, and IHEG…LMMT.

The protein belongs to the HAK/KUP transporter (TC 2.A.72) family.

The protein resides in the cell inner membrane. The enzyme catalyses K(+)(in) + H(+)(in) = K(+)(out) + H(+)(out). Functionally, transport of potassium into the cell. Likely operates as a K(+):H(+) symporter. This is Probable potassium transport system protein Kup from Bordetella avium (strain 197N).